The sequence spans 503 residues: U6 snRNA (guanine-N(2))-methyltransferase THUMPD2 (503 aa).

The THUMP domain occupies 161–266; that stretch reads CQLEKQIKEE…DIYSVVGIPV (106 aa).

The protein belongs to the methyltransferase superfamily. In terms of assembly, part of the heterodimeric THUMPD2-TRM112 methyltransferase complex; this complex forms an active tRNA methyltransferase, where TRMT112 acts as an activator of the catalytic subunit THUMPD2. Expressed in a variety of tissues including brain, colon, gingiva, heart, kidney, liver, lung, placenta, small intestine, spleen and thymus.

The protein resides in the nucleus. It carries out the reaction guanosine in U6 snRNA + S-adenosyl-L-methionine = N(2)-methylguanosine in U6 snRNA + S-adenosyl-L-homocysteine + H(+). Its function is as follows. Catalytic subunit of the THUMPD2-TRM112 methyltransferase complex, that specifically mediates the S-adenosyl-L-methionine-dependent N(2)-methylation of guanosine nucleotides, most probably at position 72 (m2G72), in the U6snRNA of the major spliceosome. This modification in the U6 snRNA affects the constitutive splicing efficiency of introns that have suboptimal splice sites and can impact final mRNA levels. The polypeptide is U6 snRNA (guanine-N(2))-methyltransferase THUMPD2 (Homo sapiens (Human)).